The sequence spans 420 residues: Aminoacyltransferase FemA (420 aa).

This sequence belongs to the FemABX family. Homodimer. Interacts with FemB.

The protein localises to the cytoplasm. It catalyses the reaction beta-D-GlcNAc-(1-&gt;4)-Mur2Ac(oyl-L-Ala-D-isoglutaminyl-L-Lys-(N(6)-Gly)-D-Ala-D-Ala)-di-trans,octa-cis-undecaprenyl diphosphate + 2 glycyl-tRNA(Gly) = MurNAc-L-Ala-D-isoglutaminyl-L-Lys-(N(6)-tri-Gly)-D-Ala-D-Ala-diphospho-di-trans,octa-cis-undecaprenyl-GlcNAc + 2 tRNA(Gly) + 2 H(+). Catalyzes the formation of the pentaglycine interpeptide bridge, which is characteristic of the S.aureus peptidoglycan. Adds glycines 2 and 3 of the pentaglycine bridge, using glycyl-tRNA(Gly) as donor. Involved in resistance to methicillin. The polypeptide is Aminoacyltransferase FemA (femA) (Staphylococcus aureus (strain NCTC 8325 / PS 47)).